Consider the following 805-residue polypeptide: Leucine--tRNA ligase (805 aa).

Positions 40-51 (PYPSGSGLHVGH) match the 'HIGH' region motif. Residues 576 to 580 (KMSKS) carry the 'KMSKS' region motif. Residue lysine 579 coordinates ATP.

The protein belongs to the class-I aminoacyl-tRNA synthetase family.

It is found in the cytoplasm. It carries out the reaction tRNA(Leu) + L-leucine + ATP = L-leucyl-tRNA(Leu) + AMP + diphosphate. The chain is Leucine--tRNA ligase from Chlorobium limicola (strain DSM 245 / NBRC 103803 / 6330).